The primary structure comprises 353 residues: Phospho-N-acetylmuramoyl-pentapeptide-transferase (353 aa).

10 helical membrane passes run 24–44 (LGFF…ILWA), 66–86 (TPTM…VLCA), 88–108 (LGNL…FVGF), 129–149 (FGML…KGLD), 160–180 (PLFE…FLST), 192–212 (GLAS…VYVA), 229–249 (VGEL…FLWY), 256–276 (VFMG…NAIV), 281–301 (ILLV…ILQV), and 330–350 (KVIV…LLSL).

This sequence belongs to the glycosyltransferase 4 family. MraY subfamily. Mg(2+) is required as a cofactor.

The protein resides in the cell inner membrane. It carries out the reaction UDP-N-acetyl-alpha-D-muramoyl-L-alanyl-gamma-D-glutamyl-meso-2,6-diaminopimeloyl-D-alanyl-D-alanine + di-trans,octa-cis-undecaprenyl phosphate = di-trans,octa-cis-undecaprenyl diphospho-N-acetyl-alpha-D-muramoyl-L-alanyl-D-glutamyl-meso-2,6-diaminopimeloyl-D-alanyl-D-alanine + UMP. It participates in cell wall biogenesis; peptidoglycan biosynthesis. Its function is as follows. Catalyzes the initial step of the lipid cycle reactions in the biosynthesis of the cell wall peptidoglycan: transfers peptidoglycan precursor phospho-MurNAc-pentapeptide from UDP-MurNAc-pentapeptide onto the lipid carrier undecaprenyl phosphate, yielding undecaprenyl-pyrophosphoryl-MurNAc-pentapeptide, known as lipid I. This is Phospho-N-acetylmuramoyl-pentapeptide-transferase from Helicobacter pylori (strain HPAG1).